The primary structure comprises 491 residues: Pentatricopeptide repeat-containing protein At5g27460 (491 aa).

PPR repeat units follow at residues 69–99 (SLSELRLISKRLIRSNRYDLALQMMEWMENQ), 105–139 (SVYDIALRLDLIIKTHGLKQGEEYFEKLLHSSVSM), 142–176 (AKSAYLPLLRAYVKNKMVKEAEALMEKLNGLGFLV), 177–211 (TPHPFNEMMKLYEASGQYEKVVMVVSMMKGNKIPR), 212–246 (NVLSYNLWMNACCEVSGVAAVETVYKEMVGDKSVE), 248–278 (GWSSLCTLANVYIKSGFDEKARLVLEDAEKM), 283–313 (NRLGYFFLITLYASLGNKEGVVRLWEVSKSV), 318–348 (SCVNYICVLSSLVKTGDLEEAERVFSEWEAQ), 353–387 (DVRVSNVLLGAYVRNGEIRKAESLHGCVLERGGTP), and 388–426 (NYKTWEILMEGWVKCENMEKAIDAMHQVFVLMRRCHWRP).

It belongs to the PPR family. P subfamily.

The chain is Pentatricopeptide repeat-containing protein At5g27460 from Arabidopsis thaliana (Mouse-ear cress).